The sequence spans 254 residues: Coproheme decarboxylase (254 aa).

Residues arginine 136, 150–154 (YPMDK), histidine 177, glutamine 190, and serine 228 each bind Fe-coproporphyrin III. Tyrosine 150 is an active-site residue.

This sequence belongs to the ChdC family. Type 1 subfamily. Requires Fe-coproporphyrin III as cofactor.

It catalyses the reaction Fe-coproporphyrin III + 2 H2O2 + 2 H(+) = heme b + 2 CO2 + 4 H2O. It carries out the reaction Fe-coproporphyrin III + H2O2 + H(+) = harderoheme III + CO2 + 2 H2O. The enzyme catalyses harderoheme III + H2O2 + H(+) = heme b + CO2 + 2 H2O. It functions in the pathway porphyrin-containing compound metabolism; protoheme biosynthesis. Involved in coproporphyrin-dependent heme b biosynthesis. Catalyzes the decarboxylation of Fe-coproporphyrin III (coproheme) to heme b (protoheme IX), the last step of the pathway. The reaction occurs in a stepwise manner with a three-propionate intermediate. The polypeptide is Coproheme decarboxylase (Bacillus licheniformis (strain ATCC 14580 / DSM 13 / JCM 2505 / CCUG 7422 / NBRC 12200 / NCIMB 9375 / NCTC 10341 / NRRL NRS-1264 / Gibson 46)).